The sequence spans 396 residues: 1-deoxy-D-xylulose 5-phosphate reductoisomerase (396 aa).

Thr-10, Gly-11, Ser-12, Ile-13, Gly-36, Lys-37, Asn-38, and Asn-124 together coordinate NADPH. Lys-125 contacts 1-deoxy-D-xylulose 5-phosphate. Position 126 (Glu-126) interacts with NADPH. Asp-150 is a binding site for Mn(2+). The 1-deoxy-D-xylulose 5-phosphate site is built by Ser-151, Glu-152, Ser-186, and His-209. Position 152 (Glu-152) interacts with Mn(2+). Gly-215 contributes to the NADPH binding site. Ser-222, Asn-227, Lys-228, and Glu-231 together coordinate 1-deoxy-D-xylulose 5-phosphate. Glu-231 contacts Mn(2+).

The protein belongs to the DXR family. Requires Mg(2+) as cofactor. Mn(2+) serves as cofactor.

It catalyses the reaction 2-C-methyl-D-erythritol 4-phosphate + NADP(+) = 1-deoxy-D-xylulose 5-phosphate + NADPH + H(+). It participates in isoprenoid biosynthesis; isopentenyl diphosphate biosynthesis via DXP pathway; isopentenyl diphosphate from 1-deoxy-D-xylulose 5-phosphate: step 1/6. Its function is as follows. Catalyzes the NADPH-dependent rearrangement and reduction of 1-deoxy-D-xylulose-5-phosphate (DXP) to 2-C-methyl-D-erythritol 4-phosphate (MEP). The chain is 1-deoxy-D-xylulose 5-phosphate reductoisomerase from Actinobacillus pleuropneumoniae serotype 5b (strain L20).